The chain runs to 431 residues: MAQKIQSVKGMNDLLPVKQKDFKLTAAFWQAFEDTVGRWTRAYGYQQIRTPIVEQTGLFVRSIGEETDVVGKEMYTFSDSNDSLSLSLRPEGTASCLRAVVEHNLLYNSPQKLWYMGPMFRRERPQKGRYRQFHQVGIEALGFEGPDIDAEIIAMSADLWEKLGIREYLTLEINSLGNREERAAHRAALVEYLTRYEDKLDEDSKRRLKTNPLRVLDTKNPDLQEICNAAPRLVDYLGEDSQNHYVRFKAMLDGLGIQYIENPRLVRGLDYYNQTVFEWTTDKLGAQATVCGGGRYDGLIEELGGKPAPSIGFAMGIERLLLLVSEYGSLEVNAAPDVYAMHQGEGADLQVMKYAQALRAQGFNVMQHSGYQSLKAQMKKADNSGARFALIVAQDELANGTVTLKDMNGAHGQQTVAAEDLTPTLQQWKNA.

The protein belongs to the class-II aminoacyl-tRNA synthetase family. Homodimer.

It localises to the cytoplasm. It catalyses the reaction tRNA(His) + L-histidine + ATP = L-histidyl-tRNA(His) + AMP + diphosphate + H(+). The polypeptide is Histidine--tRNA ligase (Neisseria meningitidis serogroup B (strain ATCC BAA-335 / MC58)).